The chain runs to 905 residues: MPLRLDIKRKLTARSDRVKSVDLHPTEPWMLASLYNGSVCVWNHETQTLVKTFEVCDLPVRAAKFVARKNWVVTGADDMQIRVFNYNTLERVHMFEAHSDYIRCIAVHPTQPFILTSSDDMLIKLWDWDKKWSCSQVFEGHTHYVMQIVINPKDNNQFASASLDRTIKVWQLGSSSPNFTLEGHEKGVNCIDYYSGGDKPYLISGADDRLVKIWDYQNKTCVQTLEGHAQNVSCASFHPELPIIITGSEDGTVRIWHSSTYRLESTLNYGMERVWCVASLRGSNNVALGYDEGSIIVKLGREEPAMSMDANGKIIWAKHSEVQQANLKAMGDTEIKDGERLPLAVKDMGSCEIYPQTIQHNPNGRFVVVCGDGEYIIYTAMALRNKSFGSAQEFAWAHDSSEYAIRESNSIVKIFKNFKEKKSFKPDFGAESIYGGFLLGVRSVNGLAFYDWENTELIRRIEIQPKHIFWSDSGELVCIATEESFFILKYLSEKVLAAQETHEGVTEDGIEDAFEVLGEIQEIVKTGLWVGDCFIYTSSVNRLNYYVGGEIVTIAHLDRTMYLLGYIPKDNRLYLGDKELNIVSYSLLVSVLEYQTAVMRRDFSMADKVLPTIPKEQRTRVAHFLEKQGFKQQALTVSTDPEHRFELALQLGELKIAYQLAVEAESEQKWKQLAELAISKCQFSLAQECLHHAQDYGGLLLLATASGNASMVNKLAEGAERDGKNNVAFMSYFLQGKLDACLELLIRTGRLPEAAFLARTYLPSQVSRVVKLWRENLSKVNQKAAESLADPTEYENLFPGLKEAFVVEEWVKETHADLWPAKQYPLVTPNEERNVMEEAKGFQPSRPTAQQEPDGKPASSPVIMASQTTHKEEKSLLELEVDLDNLELEDIDTTDINLDEDILDD.

8 WD repeats span residues 13–52 (ARSD…LVKT), 55–94 (VCDL…RVHM), 97–136 (AHSD…SCSQ), 140–180 (GHTH…PNFT), 183–224 (GHEK…CVQT), 227–266 (GHAQ…LEST), 350–388 (SCEI…NKSF), and 390–425 (SAQE…KSFK). Lysine 627 is modified (N6-acetyllysine). The stretch at 746 to 783 (IRTGRLPEAAFLARTYLPSQVSRVVKLWRENLSKVNQK) is one WD 9 repeat. Residues 837–873 (EEAKGFQPSRPTAQQEPDGKPASSPVIMASQTTHKEE) form a disordered region. Serine 859 is modified (phosphoserine). Positions 867–891 (QTTHKEEKSLLELEVDLDNLELEDI) form a coiled coil.

The protein belongs to the WD repeat COPB2 family. As to quaternary structure, oligomeric complex that consists of at least the alpha, beta, beta', gamma, delta, epsilon and zeta subunits. Probably interacts with PEX11A. Interacts with SCYL1. Interacts with JAGN1.

The protein localises to the cytoplasm. It is found in the cytosol. Its subcellular location is the golgi apparatus membrane. The protein resides in the cytoplasmic vesicle. It localises to the COPI-coated vesicle membrane. In terms of biological role, the coatomer is a cytosolic protein complex that binds to dilysine motifs and reversibly associates with Golgi non-clathrin-coated vesicles, which further mediate biosynthetic protein transport from the ER, via the Golgi up to the trans Golgi network. Coatomer complex is required for budding from Golgi membranes, and is essential for the retrograde Golgi-to-ER transport of dilysine-tagged proteins. In mammals, the coatomer can only be recruited by membranes associated to ADP-ribosylation factors (ARFs), which are small GTP-binding proteins; the complex also influences the Golgi structural integrity, as well as the processing, activity, and endocytic recycling of LDL receptors. Its function is as follows. This coatomer complex protein, essential for Golgi budding and vesicular trafficking, is a selective binding protein (RACK) for protein kinase C, epsilon type. It binds to Golgi membranes in a GTP-dependent manner. The protein is Coatomer subunit beta' (Copb2) of Mus musculus (Mouse).